A 350-amino-acid polypeptide reads, in one-letter code: Protein RecA (350 aa).

Residue Gly-68–Thr-75 participates in ATP binding.

This sequence belongs to the RecA family.

Its subcellular location is the cytoplasm. Its function is as follows. Can catalyze the hydrolysis of ATP in the presence of single-stranded DNA, the ATP-dependent uptake of single-stranded DNA by duplex DNA, and the ATP-dependent hybridization of homologous single-stranded DNAs. It interacts with LexA causing its activation and leading to its autocatalytic cleavage. In Mycolicibacterium vanbaalenii (strain DSM 7251 / JCM 13017 / BCRC 16820 / KCTC 9966 / NRRL B-24157 / PYR-1) (Mycobacterium vanbaalenii), this protein is Protein RecA.